Consider the following 145-residue polypeptide: 3-hydroxyacyl-[acyl-carrier-protein] dehydratase FabZ (145 aa).

His49 is a catalytic residue.

Belongs to the thioester dehydratase family. FabZ subfamily.

The protein localises to the cytoplasm. It catalyses the reaction a (3R)-hydroxyacyl-[ACP] = a (2E)-enoyl-[ACP] + H2O. Involved in unsaturated fatty acids biosynthesis. Catalyzes the dehydration of short chain beta-hydroxyacyl-ACPs and long chain saturated and unsaturated beta-hydroxyacyl-ACPs. The polypeptide is 3-hydroxyacyl-[acyl-carrier-protein] dehydratase FabZ (Rickettsia conorii (strain ATCC VR-613 / Malish 7)).